The following is a 358-amino-acid chain: 3-isopropylmalate dehydrogenase (358 aa).

Position 75-88 (75-88 (GPKWETLPPEKQPE)) interacts with NAD(+). Substrate is bound by residues R96, R106, R135, and D225. The Mg(2+) site is built by D225, D249, and D253. Residue 283-295 (GSAPDIAGKGVAN) coordinates NAD(+).

This sequence belongs to the isocitrate and isopropylmalate dehydrogenases family. LeuB type 1 subfamily. Homodimer. Mg(2+) serves as cofactor. The cofactor is Mn(2+).

It localises to the cytoplasm. It catalyses the reaction (2R,3S)-3-isopropylmalate + NAD(+) = 4-methyl-2-oxopentanoate + CO2 + NADH. Its pathway is amino-acid biosynthesis; L-leucine biosynthesis; L-leucine from 3-methyl-2-oxobutanoate: step 3/4. Its function is as follows. Catalyzes the oxidation of 3-carboxy-2-hydroxy-4-methylpentanoate (3-isopropylmalate) to 3-carboxy-4-methyl-2-oxopentanoate. The product decarboxylates to 4-methyl-2 oxopentanoate. The protein is 3-isopropylmalate dehydrogenase of Leptospira interrogans serogroup Icterohaemorrhagiae serovar copenhageni (strain Fiocruz L1-130).